Reading from the N-terminus, the 433-residue chain is tRNA(Ile2) 2-agmatinylcytidine synthetase TiaS (433 aa).

Belongs to the TiaS family.

The protein resides in the cytoplasm. The catalysed reaction is cytidine(34) in tRNA(Ile2) + agmatine + ATP + H2O = 2-agmatinylcytidine(34) in tRNA(Ile2) + AMP + 2 phosphate + 2 H(+). ATP-dependent agmatine transferase that catalyzes the formation of 2-agmatinylcytidine (agm2C) at the wobble position (C34) of tRNA(Ile2), converting the codon specificity from AUG to AUA. The protein is tRNA(Ile2) 2-agmatinylcytidine synthetase TiaS of Methanopyrus kandleri (strain AV19 / DSM 6324 / JCM 9639 / NBRC 100938).